Here is a 205-residue protein sequence, read N- to C-terminus: Recombination protein RecR (205 aa).

A C4-type zinc finger spans residues Cys59–Cys74. The Toprim domain maps to Arg82–Pro177.

The protein belongs to the RecR family.

In terms of biological role, may play a role in DNA repair. It seems to be involved in an RecBC-independent recombinational process of DNA repair. It may act with RecF and RecO. This chain is Recombination protein RecR, found in Neisseria gonorrhoeae (strain ATCC 700825 / FA 1090).